The chain runs to 311 residues: Cathepsin B (311 aa).

Positions 1–19 (MRVLLSLVVILFIINSAFA) are cleaved as a signal peptide. Residues 20 to 78 (VKINIGRPTKSHKTIHHETWVEEQTDQFDNIKVGQLLGFKRSPNRPKLQIKSYDPLGVQ) constitute a propeptide that is removed on maturation. Residue Asn91 is glycosylated (N-linked (GlcNAc...) asparagine). 5 disulfides stabilise this stretch: Cys92-Cys121, Cys104-Cys145, Cys138-Cys191, Cys167-Cys195, and Cys175-Cys182. The active site involves Cys107. Asn198 carries an N-linked (GlcNAc...) asparagine glycan. Residues His261 and Asn281 contribute to the active site. Asn290 is a glycosylation site (N-linked (GlcNAc...) asparagine).

It belongs to the peptidase C1 family.

The protein resides in the lysosome. The catalysed reaction is Hydrolysis of proteins with broad specificity for peptide bonds. Preferentially cleaves -Arg-Arg-|-Xaa bonds in small molecule substrates (thus differing from cathepsin L). In addition to being an endopeptidase, shows peptidyl-dipeptidase activity, liberating C-terminal dipeptides.. Its function is as follows. Thiol protease which is believed to participate in intracellular degradation and turnover of proteins. The polypeptide is Cathepsin B (ctsB) (Dictyostelium discoideum (Social amoeba)).